The chain runs to 281 residues: Proteasome subunit beta (281 aa).

Positions 1 to 53 are cleaved as a propeptide — removed in mature form; by autocatalysis; it reads MEANTRSTGRLPAAFLTPGSSSFMDFLSDHQPELLPGKRQLPPTQGVIEAPHG. Thr54 (nucleophile) is an active-site residue.

The protein belongs to the peptidase T1B family. The 20S proteasome core is composed of 14 alpha and 14 beta subunits that assemble into four stacked heptameric rings, resulting in a barrel-shaped structure. The two inner rings, each composed of seven catalytic beta subunits, are sandwiched by two outer rings, each composed of seven alpha subunits. The catalytic chamber with the active sites is on the inside of the barrel. Has a gated structure, the ends of the cylinder being occluded by the N-termini of the alpha-subunits. Is capped by the proteasome-associated ATPase, ARC.

The protein resides in the cytoplasm. The enzyme catalyses Cleavage of peptide bonds with very broad specificity.. Its pathway is protein degradation; proteasomal Pup-dependent pathway. With respect to regulation, the formation of the proteasomal ATPase ARC-20S proteasome complex, likely via the docking of the C-termini of ARC into the intersubunit pockets in the alpha-rings, may trigger opening of the gate for substrate entry. Interconversion between the open-gate and close-gate conformations leads to a dynamic regulation of the 20S proteasome proteolysis activity. Its function is as follows. Component of the proteasome core, a large protease complex with broad specificity involved in protein degradation. This chain is Proteasome subunit beta, found in Streptomyces scabiei (strain 87.22).